A 153-amino-acid chain; its full sequence is Natriuretic peptides A (153 aa).

The first 25 residues, 1–25 (MGSFSTIMASFLLFLAFQLQGQTRA), serve as a signal peptide directing secretion. Propeptides lie at residues 26-123 (NPVY…AAPR) and 93-103 (DGGALGRGSWD). The disordered stretch occupies residues 54–105 (EDEVMPPQVLSDQSEEERAALSPLPEVPPWTGEVNPAQRDGGALGRGSWDSS). A Phosphoserine modification is found at serine 129. Cysteine 130 and cysteine 146 are disulfide-bonded. An important for degradation of atrial natriuretic peptide by IDE region spans residues 147-151 (NSFRY).

Belongs to the natriuretic peptide family. Homodimer; disulfide-linked antiparallel dimer. In terms of processing, the precursor molecule is proteolytically cleaved by CORIN at Arg-123 to produce the atrial natriuretic peptide. Undergoes further proteolytic cleavage by unknown proteases to give rise to long-acting natriuretic peptide, vessel dilator and kaliuretic peptide. Additional processing gives rise to the auriculin and atriopeptin peptides. In the kidneys, alternative processing by an unknown protease results in the peptide urodilatin. Post-translationally, cleavage by MME initiates degradation of the factor and thereby regulates its activity. Degradation by IDE results in reduced activation of NPR1 (in vitro). During IDE degradation, the resulting products can temporarily stimulate NPR2 to produce cGMP, before the fragments are completely degraded and inactivated by IDE (in vitro). Degraded by IDE. In terms of processing, phosphorylation on Ser-129 decreases vasorelaxant activity.

Its subcellular location is the secreted. It is found in the perikaryon. The protein localises to the cell projection. In terms of biological role, hormone that plays a key role in mediating cardio-renal homeostasis, and is involved in vascular remodeling and regulating energy metabolism. Acts by specifically binding and stimulating NPR1 to produce cGMP, which in turn activates effector proteins, such as PRKG1, that drive various biological responses. Regulates vasodilation, natriuresis, diuresis and aldosterone synthesis and is therefore essential for regulating blood pressure, controlling the extracellular fluid volume and maintaining the fluid-electrolyte balance. Also involved in inhibiting cardiac remodeling and cardiac hypertrophy by inducing cardiomyocyte apoptosis and attenuating the growth of cardiomyocytes and fibroblasts. Plays a role in female pregnancy by promoting trophoblast invasion and spiral artery remodeling in uterus, and thus prevents pregnancy-induced hypertension. In adipose tissue, acts in various cGMP- and PKG-dependent pathways to regulate lipid metabolism and energy homeostasis. This includes up-regulating lipid metabolism and mitochondrial oxygen utilization by activating the AMP-activated protein kinase (AMPK), and increasing energy expenditure by acting via MAPK11 to promote the UCP1-dependent thermogenesis of brown adipose tissue. Binds the clearance receptor NPR3 which removes the hormone from circulation. Its function is as follows. May have a role in cardio-renal homeostasis through regulation of natriuresis, diuresis, vasodilation, and inhibiting aldosterone synthesis. In vitro, promotes the production of cGMP and induces vasodilation. May promote natriuresis, at least in part, by enhancing prostaglandin E2 synthesis resulting in the inhibition of renal Na+-K+-ATPase. However reports on the involvement of this peptide in mammal blood volume and blood pressure homeostasis are conflicting; according to a report, in vivo it is not sufficient to activate cGMP and does not inhibit collecting duct transport nor effect diuresis and natriuresis. Appears to bind to specific receptors that are distinct from the receptors bound by atrial natriuretic peptide and vessel dilator. Possibly enhances protein excretion in urine by decreasing proximal tubular protein reabsorption. Functionally, may have a role in cardio-renal homeostasis through regulation of natriuresis, diuresis, and vasodilation. In vitro, promotes the production of cGMP and induces vasodilation. May promote natriuresis, at least in part, by enhancing prostaglandin E2 synthesis resulting in the inhibition of renal Na+-K+-ATPase. However reports on the involvement of this peptide in mammal blood volume and blood pressure homeostasis are conflicting; according to a report it is not sufficient to activate cGMP and does not inhibit collecting duct transport nor effect diuresis and natriuresis. Appears to bind to specific receptors that are distinct from the receptors bound by the atrial natriuretic and long-acting natriuretic peptides. Possibly functions in protein excretion in urine by maintaining the integrity of the proximal tubules and enhancing protein excretion by decreasing proximal tubular protein reabsorption. May have a role in cardio-renal homeostasis through regulation of diuresis and inhibiting aldosterone synthesis. In vitro, promotes the production of cGMP and induces vasodilation. May promote natriuresis, at least in part, by enhancing prostaglandin E2 synthesis resulting in the inhibition of renal Na+-K+-ATPase. May have a role in potassium excretion but not sodium excretion (natriuresis). Possibly enhances protein excretion in urine by decreasing proximal tubular protein reabsorption. In terms of biological role, hormone produced in the kidneys that appears to be important for maintaining cardio-renal homeostasis. Mediates vasodilation, natriuresis and diuresis primarily in the renal system, in order to maintain the extracellular fluid volume and control the fluid-electrolyte balance. Specifically binds and stimulates cGMP production by renal transmembrane receptors, likely NPR1. Urodilatin not ANP, may be the natriuretic peptide responsible for the regulation of sodium and water homeostasis in the kidney. Its function is as follows. May have a role in cardio-renal homeostasis through regulation of natriuresis and vasodilation. In vivo promotes natriuresis and in vitro, vasodilates renal artery strips. Functionally, may have a role in cardio-renal homeostasis through regulation of regulation of natriuresis and vasodilation. In vivo promotes natriuresis. In vitro, vasodilates intestinal smooth muscle but not smooth muscle strips. May have a role in cardio-renal homeostasis through regulation of natriuresis and vasodilation. In vivo promotes natriuresis. In vitro, selectively vasodilates intestinal and vascular smooth muscle strips. In terms of biological role, may have a role in cardio-renal homeostasis through regulation of natriuresis and vasodilation. In vivo promotes natriuresis. In vitro, selectively vasodilates intestinal smooth muscle but not vascular smooth muscle strips. This Equus caballus (Horse) protein is Natriuretic peptides A (NPPA).